A 90-amino-acid chain; its full sequence is Small ribosomal subunit protein uS15c (90 aa).

It belongs to the universal ribosomal protein uS15 family. In terms of assembly, part of the 30S ribosomal subunit.

Its subcellular location is the plastid. The protein resides in the chloroplast. The polypeptide is Small ribosomal subunit protein uS15c (rps15) (Nandina domestica (Heavenly bamboo)).